The primary structure comprises 342 residues: Palmitoyltransferase PFA4 (342 aa).

The Cytoplasmic portion of the chain corresponds to 1-8 (MITFSNPW). A helical membrane pass occupies residues 9-29 (IGVIIPCIIIFTLSTFSAIYI). At 30 to 38 (LPHHVSNNE) the chain is on the lumenal side. The chain crosses the membrane as a helical span at residues 39-59 (LTLFICASAMVWISYIIAIIV). Topologically, residues 60 to 124 (PPGSPPKNYT…GHRNMPHFMR (65 aa)) are cytoplasmic. In terms of domain architecture, DHHC spans 77 to 127 (MYCLKCKAYKPERTHHSKALGVCVLKMDHHCPWTNNTVGHRNMPHFMRFLV). The active-site S-palmitoyl cysteine intermediate is the cysteine 107. A helical transmembrane segment spans residues 125-145 (FLVWVDMTVGYLFIRLCIRIM). The Lumenal segment spans residues 146-162 (KLWRDKHLPSYLFDKTE). Residues 163 to 183 (VILSIVFLPASFFVLFTVGIL) traverse the membrane as a helical segment. Over 184–342 (TIRVFVNMCN…ADFGVEHTDI (159 aa)) the chain is Cytoplasmic.

This sequence belongs to the DHHC palmitoyltransferase family. PFA4 subfamily.

It localises to the endoplasmic reticulum membrane. It catalyses the reaction L-cysteinyl-[protein] + hexadecanoyl-CoA = S-hexadecanoyl-L-cysteinyl-[protein] + CoA. In terms of biological role, mediates the reversible addition of palmitate to target proteins, thereby regulating their membrane association and biological function. The polypeptide is Palmitoyltransferase PFA4 (Yarrowia lipolytica (strain CLIB 122 / E 150) (Yeast)).